Reading from the N-terminus, the 214-residue chain is 3-demethoxyubiquinol 3-hydroxylase (214 aa).

Fe cation is bound by residues Glu-63, Glu-93, His-96, Glu-145, Glu-177, and His-180.

The protein belongs to the COQ7 family. Requires Fe cation as cofactor.

The protein resides in the cell membrane. The catalysed reaction is a 5-methoxy-2-methyl-3-(all-trans-polyprenyl)benzene-1,4-diol + AH2 + O2 = a 3-demethylubiquinol + A + H2O. Its pathway is cofactor biosynthesis; ubiquinone biosynthesis. Catalyzes the hydroxylation of 2-nonaprenyl-3-methyl-6-methoxy-1,4-benzoquinol during ubiquinone biosynthesis. This Nitrosococcus oceani (strain ATCC 19707 / BCRC 17464 / JCM 30415 / NCIMB 11848 / C-107) protein is 3-demethoxyubiquinol 3-hydroxylase.